Here is a 364-residue protein sequence, read N- to C-terminus: Dual-specificity RNA methyltransferase RlmN (364 aa).

The active-site Proton acceptor is glutamate 91. The Radical SAM core domain maps to 97 to 333 (ESDRGTLCIS…VTVRKTRGDD (237 aa)). Cysteine 104 and cysteine 338 are oxidised to a cystine. Positions 111, 115, and 118 each coordinate [4Fe-4S] cluster. S-adenosyl-L-methionine is bound by residues 164–165 (GE), serine 196, 218–220 (SLH), and asparagine 295. Cysteine 338 (S-methylcysteine intermediate) is an active-site residue.

Belongs to the radical SAM superfamily. RlmN family. [4Fe-4S] cluster is required as a cofactor.

It is found in the cytoplasm. The enzyme catalyses adenosine(2503) in 23S rRNA + 2 reduced [2Fe-2S]-[ferredoxin] + 2 S-adenosyl-L-methionine = 2-methyladenosine(2503) in 23S rRNA + 5'-deoxyadenosine + L-methionine + 2 oxidized [2Fe-2S]-[ferredoxin] + S-adenosyl-L-homocysteine. It catalyses the reaction adenosine(37) in tRNA + 2 reduced [2Fe-2S]-[ferredoxin] + 2 S-adenosyl-L-methionine = 2-methyladenosine(37) in tRNA + 5'-deoxyadenosine + L-methionine + 2 oxidized [2Fe-2S]-[ferredoxin] + S-adenosyl-L-homocysteine. Its function is as follows. Specifically methylates position 2 of adenine 2503 in 23S rRNA and position 2 of adenine 37 in tRNAs. m2A2503 modification seems to play a crucial role in the proofreading step occurring at the peptidyl transferase center and thus would serve to optimize ribosomal fidelity. This is Dual-specificity RNA methyltransferase RlmN from Neisseria meningitidis serogroup C / serotype 2a (strain ATCC 700532 / DSM 15464 / FAM18).